The primary structure comprises 74 residues: EMBRYO SURROUNDING FACTOR 1-like protein 4 (74 aa).

Residues 1–22 (MKSSHAYLVCILLLSLFSLHQC) form the signal peptide. Disulfide bonds link Cys-36-Cys-51, Cys-41-Cys-70, Cys-49-Cys-66, and Cys-52-Cys-59.

The protein belongs to the MEG family. In terms of tissue distribution, expressed in flowers.

In Arabidopsis thaliana (Mouse-ear cress), this protein is EMBRYO SURROUNDING FACTOR 1-like protein 4 (ESFL4).